Consider the following 702-residue polypeptide: Polyribonucleotide nucleotidyltransferase (702 aa).

Mg(2+)-binding residues include aspartate 491 and aspartate 497. The KH domain maps to 558 to 618 (PKMKTFMIPV…TAIEKAYQLI (61 aa)). The S1 motif domain occupies 628–696 (GEKIIGPVVK…GKGKIKLQLI (69 aa)).

Belongs to the polyribonucleotide nucleotidyltransferase family. Mg(2+) is required as a cofactor.

It localises to the cytoplasm. The catalysed reaction is RNA(n+1) + phosphate = RNA(n) + a ribonucleoside 5'-diphosphate. Functionally, involved in mRNA degradation. Catalyzes the phosphorolysis of single-stranded polyribonucleotides processively in the 3'- to 5'-direction. This is Polyribonucleotide nucleotidyltransferase from Spiroplasma citri.